A 179-amino-acid chain; its full sequence is Translation initiation factor IF-3 (179 aa).

This sequence belongs to the IF-3 family. Monomer.

The protein localises to the cytoplasm. Its function is as follows. IF-3 binds to the 30S ribosomal subunit and shifts the equilibrium between 70S ribosomes and their 50S and 30S subunits in favor of the free subunits, thus enhancing the availability of 30S subunits on which protein synthesis initiation begins. This Buchnera aphidicola subsp. Acyrthosiphon pisum (strain 5A) protein is Translation initiation factor IF-3.